The primary structure comprises 214 residues: Putative AgrB-like protein (214 aa).

5 helical membrane passes run 41–61, 82–102, 109–129, 154–174, and 182–202; these read IISV…LIFL, CTLL…SSFF, IIVF…FKFA, ILTI…NLGW, and LSII…GNIL.

This sequence belongs to the AgrB family.

The protein resides in the cell membrane. Its function is as follows. May be involved in the proteolytic processing of a quorum sensing system signal molecule precursor. The chain is Putative AgrB-like protein from Clostridium perfringens (strain SM101 / Type A).